The chain runs to 231 residues: Succinate dehydrogenase subunit 5, mitochondrial (231 aa).

The N-terminal 63 residues, 1–63 (MAAALRSSCA…AFSWNLRRLF (63 aa)), are a transit peptide targeting the mitochondrion.

As to quaternary structure, component of complex II composed of eight subunits in plants: four classical SDH subunits SDH1, SDH2, SDH3 and SDH4 (a flavoprotein (FP), an iron-sulfur protein (IP), and a cytochrome b composed of a large and a small subunit.), as well as four subunits unknown in mitochondria from bacteria and heterotrophic eukaryotes.

The protein localises to the mitochondrion inner membrane. The protein operates within carbohydrate metabolism; tricarboxylic acid cycle. The sequence is that of Succinate dehydrogenase subunit 5, mitochondrial from Oryza sativa subsp. japonica (Rice).